A 90-amino-acid chain; its full sequence is Probable Fe(2+)-trafficking protein (90 aa).

This sequence belongs to the Fe(2+)-trafficking protein family.

In terms of biological role, could be a mediator in iron transactions between iron acquisition and iron-requiring processes, such as synthesis and/or repair of Fe-S clusters in biosynthetic enzymes. The sequence is that of Probable Fe(2+)-trafficking protein from Cupriavidus taiwanensis (strain DSM 17343 / BCRC 17206 / CCUG 44338 / CIP 107171 / LMG 19424 / R1) (Ralstonia taiwanensis (strain LMG 19424)).